The primary structure comprises 331 residues: 6-phosphogluconolactonase (331 aa).

At lysine 287 the chain carries N6-acetyllysine.

The protein belongs to the cycloisomerase 2 family.

It carries out the reaction 6-phospho-D-glucono-1,5-lactone + H2O = 6-phospho-D-gluconate + H(+). Its pathway is carbohydrate degradation; pentose phosphate pathway; D-ribulose 5-phosphate from D-glucose 6-phosphate (oxidative stage): step 2/3. Functionally, catalyzes the hydrolysis of 6-phosphogluconolactone to 6-phosphogluconate. This chain is 6-phosphogluconolactonase, found in Escherichia coli O8 (strain IAI1).